Consider the following 611-residue polypeptide: Leukotriene A-4 hydrolase (611 aa).

Position 73 is an N6-acetyllysine (K73). Residues 135 to 137 and 267 to 272 each bind a peptide; these read QCQ and SYGGME. H296 serves as a coordination point for Zn(2+). E297 acts as the Proton acceptor in catalysis. The Zn(2+) site is built by H300 and E319. K337 is modified (N6-acetyllysine). Y384 serves as the catalytic Proton donor. The residue at position 414 (K414) is an N6-acetyllysine. Phosphoserine is present on S416. 564–566 serves as a coordination point for a peptide; sequence RMK. Position 573 is an N6-acetyllysine (K573).

Belongs to the peptidase M1 family. In terms of assembly, monomer. Zn(2+) is required as a cofactor. In terms of processing, phosphorylation at Ser-416 inhibits leukotriene-A4 hydrolase activity. activity.

Its subcellular location is the cytoplasm. The enzyme catalyses leukotriene A4 + H2O = leukotriene B4. It carries out the reaction (5S,6S)-epoxy-(18R)-hydroxy-(7E,9E,11Z,14Z,16E)-eicosapentaenoate + H2O = resolvin E1. It catalyses the reaction (5S,6S)-epoxy-(18S)-hydroxy-(7E,9E,11Z,14Z,16E)-eicosapentaenoate + H2O = 18S-resolvin E1. The catalysed reaction is Release of the N-terminal residue from a tripeptide.. The protein operates within lipid metabolism; leukotriene B4 biosynthesis. Its activity is regulated as follows. Inhibited by bestatin. The epoxide hydrolase activity is restrained by suicide inactivation that involves binding of LTA4 to Tyr-379. 4-(4-benzylphenyl)thiazol-2-amine (ARM1) selectively inhibits the epoxide hydrolase activity. In terms of biological role, bifunctional zinc metalloenzyme that comprises both epoxide hydrolase (EH) and aminopeptidase activities. Acts as an epoxide hydrolase to catalyze the conversion of LTA4 to the pro-inflammatory mediator leukotriene B4 (LTB4). Also has aminopeptidase activity, with high affinity for N-terminal arginines of various synthetic tripeptides. In addition to its pro-inflammatory EH activity, may also counteract inflammation by its aminopeptidase activity, which inactivates by cleavage another neutrophil attractant, the tripeptide Pro-Gly-Pro (PGP), a bioactive fragment of collagen generated by the action of matrix metalloproteinase-9 (MMP9) and prolylendopeptidase (PREPL). Involved also in the biosynthesis of resolvin E1 and 18S-resolvin E1 from eicosapentaenoic acid, two lipid mediators that show potent anti-inflammatory and pro-resolving actions. This chain is Leukotriene A-4 hydrolase (LTA4H), found in Cavia porcellus (Guinea pig).